We begin with the raw amino-acid sequence, 274 residues long: Nitrogenase iron protein (274 aa).

8–15 is an ATP binding site; sequence GKGGIGKS. Cys-94 is a [4Fe-4S] cluster binding site. ADP-ribosylarginine; by dinitrogenase reductase ADP-ribosyltransferase is present on Arg-97. A [4Fe-4S] cluster-binding site is contributed by Cys-129.

This sequence belongs to the NifH/BchL/ChlL family. As to quaternary structure, homodimer. The cofactor is [4Fe-4S] cluster. The reversible ADP-ribosylation of Arg-97 inactivates the nitrogenase reductase and regulates nitrogenase activity.

It carries out the reaction N2 + 8 reduced [2Fe-2S]-[ferredoxin] + 16 ATP + 16 H2O = H2 + 8 oxidized [2Fe-2S]-[ferredoxin] + 2 NH4(+) + 16 ADP + 16 phosphate + 6 H(+). Functionally, the key enzymatic reactions in nitrogen fixation are catalyzed by the nitrogenase complex, which has 2 components: the iron protein and the molybdenum-iron protein. The protein is Nitrogenase iron protein of Methanocella arvoryzae (strain DSM 22066 / NBRC 105507 / MRE50).